A 412-amino-acid polypeptide reads, in one-letter code: Palmitoyltransferase ZDHHC6 (412 aa).

The Cytoplasmic segment spans residues 1-24 (MNILSAIIVFENLHEVKRLFHWGP). A helical transmembrane segment spans residues 25-45 (IIALTVIGVCSSMAILDSIIW). Topologically, residues 46–57 (YWPLDTTGGSIN) are lumenal. The chain crosses the membrane as a helical span at residues 58-78 (FIMLINWTVLILYNYFNAMFV). The Cytoplasmic portion of the chain corresponds to 79–143 (GPGYIPLEWK…NCCGHLNHAY (65 aa)). Residues 99–149 (QFCRLCQGYKAPRSHHCRKCNRCVMKMDHHCPWINNCCGHLNHAYFTSFLL) enclose the DHHC domain. Residue cysteine 129 is the S-palmitoyl cysteine intermediate of the active site. Residues 144 to 164 (FTSFLLLAPLGCIHAALIFIM) traverse the membrane as a helical segment. At 165–205 (TMYTQLYDRISFGWSSVKIDMSAARHIHHPIMPFSIAAFAA) the chain is on the lumenal side. The helical transmembrane segment at 206 to 226 (TLFALGLALGTTIAVGMLFFI) threads the bilayer. The Cytoplasmic segment spans residues 227-412 (QMKVILRNRT…NSTSEEKKEQ (186 aa)). In terms of domain architecture, SH3 spans 313–398 (QRSVEYRVVE…PRRCVEKCLY (86 aa)). 3 S-palmitoyl cysteine lipidation sites follow: cysteine 328, cysteine 329, and cysteine 343. Residues 409–412 (KKEQ) carry the Di-lysine motif motif.

Belongs to the DHHC palmitoyltransferase family.

It localises to the endoplasmic reticulum membrane. The catalysed reaction is L-cysteinyl-[protein] + hexadecanoyl-CoA = S-hexadecanoyl-L-cysteinyl-[protein] + CoA. The enzyme catalyses L-cysteinyl-[protein] + octadecanoyl-CoA = S-octadecanoyl-L-cysteinyl-[protein] + CoA. Its function is as follows. Endoplasmic reticulum palmitoyl acyltransferase that probably catalyzes the addition of palmitate onto various protein substrates and is involved in a variety of cellular processes. Could also function as a stearoyltransferase. The polypeptide is Palmitoyltransferase ZDHHC6 (Danio rerio (Zebrafish)).